The chain runs to 1357 residues: Vascular endothelial growth factor receptor 3 (1357 aa).

An N-terminal signal peptide occupies residues 1–24 (MKRDFTFFCRIWIGIPFFSGLVNG). Ig-like C2-type domains are found at residues 25–121 (FSMS…YYRC), 138–244 (IFVF…VQVI), 255–343 (PEDS…RELT), 352–442 (PFIS…LNFT), 453–583 (EKEA…TTIP), 583–690 (PEGF…HRKY), and 699–785 (PRYR…ATVS). Residues 25 to 796 (FSMSPPTLDN…IGSDDKTNVE (772 aa)) lie on the Extracellular side of the membrane. N-linked (GlcNAc...) asparagine glycosylation is found at Asn-44, Asn-48, Asn-114, Asn-216, and Asn-271. 2 disulfide bridges follow: Cys-51-Cys-121 and Cys-173-Cys-225. Cys-272 and Cys-331 are joined by a disulfide. N-linked (GlcNAc...) asparagine glycans are attached at residues Asn-360, Asn-400, and Asn-440. 3 disulfide bridges follow: Cys-473–Cys-562, Cys-493–Cys-514, and Cys-606–Cys-674. N-linked (GlcNAc...) asparagine glycans are attached at residues Asn-553, Asn-610, Asn-660, Asn-707, Asn-711, and Asn-751. Cys-720 and Cys-772 are joined by a disulfide. Residues 797–817 (IVILIGTGVIAIFFWVLLLVI) form a helical membrane-spanning segment. Topologically, residues 818 to 1357 (FCNVKRVNPA…DYFSSSDQAV (540 aa)) are cytoplasmic. The region spanning 866-1181 (LRLGKVLGHG…ALVEILGDLL (316 aa)) is the Protein kinase domain. ATP contacts are provided by residues 872-880 (LGHGAFGKV) and Lys-900. The tract at residues 978-1007 (QSQVRRMIEAGQASQSEHQPSTSSTNPPRV) is disordered. Positions 989–1005 (QASQSEHQPSTSSTNPP) are enriched in polar residues. Catalysis depends on Asp-1045, which acts as the Proton acceptor. Phosphotyrosine; by autocatalysis occurs at positions 1071 and 1076. The disordered stretch occupies residues 1192-1212 (NVSQSSEDDGFSQASSRPPSQ). 4 positions are modified to phosphotyrosine; by autocatalysis: Tyr-1226, Tyr-1227, Tyr-1334, and Tyr-1338.

This sequence belongs to the protein kinase superfamily. Tyr protein kinase family. CSF-1/PDGF receptor subfamily. As to quaternary structure, interacts with vegfc and vegfd. Monomer in the absence of bound vegfc or vegfd. Homodimer in the presence of bound vegfc or vegfd. Post-translationally, autophosphorylated on tyrosine residues upon ligand binding. Autophosphorylation occurs in trans, i.e. one subunit of the dimeric receptor phosphorylates tyrosine residues on the other subunit.

It is found in the cell membrane. Its subcellular location is the cytoplasm. It localises to the nucleus. It carries out the reaction L-tyrosyl-[protein] + ATP = O-phospho-L-tyrosyl-[protein] + ADP + H(+). Present in an inactive conformation in the absence of bound ligand. Binding of vegfc or vegfd leads to dimerization and activation by autophosphorylation on tyrosine residues. Tyrosine-protein kinase that acts as a cell-surface receptor for vegf or vegfc. Combinations of multiple VEGF receptors are required for development of different blood vessel types in the embryo. Involved in angiogenesis, specifically in VEGF-induced sprouting of new blood vessels, but not required for proper vasculogenesis or hematopoiesis. In Danio rerio (Zebrafish), this protein is Vascular endothelial growth factor receptor 3 (flt4).